Consider the following 247-residue polypeptide: Ribonuclease PH (247 aa).

Residues Arg87 and 125 to 127 (GTR) contribute to the phosphate site.

Belongs to the RNase PH family. In terms of assembly, homohexameric ring arranged as a trimer of dimers.

It catalyses the reaction tRNA(n+1) + phosphate = tRNA(n) + a ribonucleoside 5'-diphosphate. Functionally, phosphorolytic 3'-5' exoribonuclease that plays an important role in tRNA 3'-end maturation. Removes nucleotide residues following the 3'-CCA terminus of tRNAs; can also add nucleotides to the ends of RNA molecules by using nucleoside diphosphates as substrates, but this may not be physiologically important. Probably plays a role in initiation of 16S rRNA degradation (leading to ribosome degradation) during starvation. The polypeptide is Ribonuclease PH (Trichormus variabilis (strain ATCC 29413 / PCC 7937) (Anabaena variabilis)).